The sequence spans 300 residues: GTPase Era (300 aa).

Residues 4–172 (KSGFVALAGK…LEKIKEELPE (169 aa)) enclose the Era-type G domain. Residues 12–19 (GKPNVGKS) are G1. 12–19 (GKPNVGKS) contacts GTP. The interval 38–42 (QTTRN) is G2. The G3 stretch occupies residues 59–62 (DTPG). Residues 59–63 (DTPGI) and 121–124 (NKID) each bind GTP. Positions 121 to 124 (NKID) are G4. Positions 151-153 (ISA) are G5. In terms of domain architecture, KH type-2 spans 195–280 (IREKIFHLTR…YLDLNVKVKE (86 aa)).

The protein belongs to the TRAFAC class TrmE-Era-EngA-EngB-Septin-like GTPase superfamily. Era GTPase family. As to quaternary structure, monomer.

The protein localises to the cytoplasm. It localises to the cell inner membrane. Functionally, an essential GTPase that binds both GDP and GTP, with rapid nucleotide exchange. Plays a role in 16S rRNA processing and 30S ribosomal subunit biogenesis and possibly also in cell cycle regulation and energy metabolism. This is GTPase Era from Thermotoga petrophila (strain ATCC BAA-488 / DSM 13995 / JCM 10881 / RKU-1).